A 92-amino-acid polypeptide reads, in one-letter code: Progonadoliberin-1 (92 aa).

Positions 1 to 23 (MKPIQKLLAGLILLTWCVEGCSS) are cleaved as a signal peptide. Q24 bears the Pyrrolidone carboxylic acid mark. The residue at position 33 (G33) is a Glycine amide.

It belongs to the GnRH family. The precursor is cleaved by ACE, which removes the Gly-Lys-Arg peptide at the C-terminus, leading to mature hormone. The mature form of Gonadoliberin-1 is also cleaved and degraded by ACE.

It is found in the secreted. In terms of biological role, stimulates the secretion of gonadotropins; it stimulates the secretion of both luteinizing and follicle-stimulating hormones. The polypeptide is Progonadoliberin-1 (GNRH1) (Homo sapiens (Human)).